Reading from the N-terminus, the 679-residue chain is tRNA uridine 5-carboxymethylaminomethyl modification enzyme MnmG (679 aa).

13–18 (GGGHAG) contacts FAD. An NAD(+)-binding site is contributed by 280–294 (GPRYCPSVEDKINRF).

It belongs to the MnmG family. In terms of assembly, homodimer. Heterotetramer of two MnmE and two MnmG subunits. FAD serves as cofactor.

It localises to the cytoplasm. In terms of biological role, NAD-binding protein involved in the addition of a carboxymethylaminomethyl (cmnm) group at the wobble position (U34) of certain tRNAs, forming tRNA-cmnm(5)s(2)U34. The sequence is that of tRNA uridine 5-carboxymethylaminomethyl modification enzyme MnmG from Albidiferax ferrireducens (strain ATCC BAA-621 / DSM 15236 / T118) (Rhodoferax ferrireducens).